A 242-amino-acid chain; its full sequence is Arginine transport ATP-binding protein ArtP (242 aa).

Residues 3–241 (IQLNGINCFY…QTEAFKNYLS (239 aa)) form the ABC transporter domain. ATP is bound at residue 35-42 (GPSGAGKS).

It belongs to the ABC transporter superfamily. As to quaternary structure, the complex is composed of two ATP-binding proteins (ArtP), two transmembrane proteins (ArtM and ArtQ) and two solute-binding proteins (ArtJ and ArtI).

The protein resides in the cell inner membrane. It catalyses the reaction a polar amino acid(out) + ATP + H2O = a polar amino acid(in) + ADP + phosphate + H(+). It carries out the reaction L-arginine(out) + ATP + H2O = L-arginine(in) + ADP + phosphate + H(+). Part of the ABC transporter complex ArtPIQMJ involved in arginine transport. Probably responsible for energy coupling to the transport system. The chain is Arginine transport ATP-binding protein ArtP (artP) from Escherichia coli O157:H7.